The primary structure comprises 156 residues: Small ribosomal subunit protein uS7 (156 aa).

It belongs to the universal ribosomal protein uS7 family. Part of the 30S ribosomal subunit. Contacts proteins S9 and S11.

Its function is as follows. One of the primary rRNA binding proteins, it binds directly to 16S rRNA where it nucleates assembly of the head domain of the 30S subunit. Is located at the subunit interface close to the decoding center, probably blocks exit of the E-site tRNA. This is Small ribosomal subunit protein uS7 from Acinetobacter baumannii (strain AB307-0294).